The chain runs to 893 residues: Sulfate permease 2 (893 aa).

A disordered region spans residues 1-25; that stretch reads MSREGYPNFEEVEIPDFQETNNTVP. The Cytoplasmic segment spans residues 1-131; it reads MSREGYPNFE…VFPIINWLPH (131 aa). A helical membrane pass occupies residues 132-152; sequence YNFSWFTADLIAGITIGCVLV. The Extracellular portion of the chain corresponds to 153 to 163; it reads PQSMSYAQVAT. Residues 164 to 184 form a helical membrane-spanning segment; that stretch reads LPAQYGLYSSFIGAYSYSFFA. Over 185–188 the chain is Cytoplasmic; sequence TSKD. Residues 189 to 209 form a helical membrane-spanning segment; that stretch reads VCIGPVAVMSLQTAKVIADVT. Topologically, residues 210–221 are extracellular; sequence AKYPDGDSAITG. Residues 222–242 traverse the membrane as a helical segment; the sequence is PVIATTLALLCGIISAAVGFL. Residues 243 to 244 lie on the Cytoplasmic side of the membrane; it reads RL. Residues 245 to 265 form a helical membrane-spanning segment; the sequence is GFLVELISLNAVAGFMTGSAF. Residues 266 to 305 are Extracellular-facing; sequence NILWGQVPALMGYNSLVNTRAATYKVVIETLKHLPDTKLD. Residues 306–326 traverse the membrane as a helical segment; that stretch reads AVFGLIPLFLLYVWKWWCGTY. The Cytoplasmic portion of the chain corresponds to 327–350; that stretch reads GPRLNDRYNSKNPRLHKIIKWTYF. A helical transmembrane segment spans residues 351–371; it reads YAQASRNGIIIIVFTCIGWAI. At 372 to 399 the chain is on the extracellular side; it reads TRGKSKSERPISILGSVPSGLKEVGVFH. A helical transmembrane segment spans residues 400 to 420; sequence VPPGLMSKLGPNLPASIIVLL. Residues 421-443 lie on the Cytoplasmic side of the membrane; it reads LEHIAISKSFGRINDYKVVPDQE. A helical transmembrane segment spans residues 444-464; sequence LIAIGVSNLLGTFFNAYPATG. Residues 465–483 lie on the Extracellular side of the membrane; it reads SFSRSALKAKCNVRTPLSG. The helical transmembrane segment at 484 to 504 threads the bilayer; sequence LFSGSCVLLALYCLTGAFFYI. The Cytoplasmic portion of the chain corresponds to 505–532; it reads PKATLSAVIIHAVSDLLASYQTTWNFWK. The helical transmembrane segment at 533–551 threads the bilayer; it reads MNPLDFICFIVTVLITVFA. Over 552-559 the chain is Extracellular; the sequence is SIEDGIYF. The chain crosses the membrane as a helical span at residues 560–580; that stretch reads AMCWSCAMLILKVAFPAGKFL. At 581–893 the chain is on the cytoplasmic side; it reads GRVEVAEVTD…DIPDFAKWDI (313 aa). One can recognise an STAS domain in the interval 676 to 854; sequence DVQILPPPDG…SIVAGHTSYH (179 aa).

This sequence belongs to the SLC26A/SulP transporter (TC 2.A.53) family.

It localises to the membrane. Functionally, high affinity uptake of sulfate into the cell. The sequence is that of Sulfate permease 2 (SUL2) from Saccharomyces cerevisiae (strain ATCC 204508 / S288c) (Baker's yeast).